We begin with the raw amino-acid sequence, 484 residues long: Glutamyl-tRNA(Gln) amidotransferase subunit B, mitochondrial (484 aa).

It belongs to the GatB/GatE family. GatB subfamily. In terms of assembly, subunit of the heterotrimeric GatFAB amidotransferase (AdT) complex, composed of A, B and F subunits.

It is found in the mitochondrion. The catalysed reaction is L-glutamyl-tRNA(Gln) + L-glutamine + ATP + H2O = L-glutaminyl-tRNA(Gln) + L-glutamate + ADP + phosphate + H(+). Functionally, allows the formation of correctly charged Gln-tRNA(Gln) through the transamidation of misacylated Glu-tRNA(Gln) in the mitochondria. The reaction takes place in the presence of glutamine and ATP through an activated gamma-phospho-Glu-tRNA(Gln). This is Glutamyl-tRNA(Gln) amidotransferase subunit B, mitochondrial from Candida tropicalis (strain ATCC MYA-3404 / T1) (Yeast).